The following is a 389-amino-acid chain: S-adenosylmethionine synthase (389 aa).

Residue His-17 coordinates ATP. Asp-19 contributes to the Mg(2+) binding site. A K(+)-binding site is contributed by Glu-45. Glu-58 and Gln-102 together coordinate L-methionine. Residues 102–112 (QSADIAQGVDA) form a flexible loop region. Residues 167 to 169 (DAK), Asp-241, 247 to 248 (RK), Ala-264, and Lys-268 each bind ATP. L-methionine is bound at residue Asp-241. Lys-272 is an L-methionine binding site.

The protein belongs to the AdoMet synthase family. As to quaternary structure, homotetramer; dimer of dimers. Mg(2+) serves as cofactor. K(+) is required as a cofactor.

Its subcellular location is the cytoplasm. The enzyme catalyses L-methionine + ATP + H2O = S-adenosyl-L-methionine + phosphate + diphosphate. It participates in amino-acid biosynthesis; S-adenosyl-L-methionine biosynthesis; S-adenosyl-L-methionine from L-methionine: step 1/1. Its function is as follows. Catalyzes the formation of S-adenosylmethionine (AdoMet) from methionine and ATP. The overall synthetic reaction is composed of two sequential steps, AdoMet formation and the subsequent tripolyphosphate hydrolysis which occurs prior to release of AdoMet from the enzyme. The chain is S-adenosylmethionine synthase from Parvibaculum lavamentivorans (strain DS-1 / DSM 13023 / NCIMB 13966).